We begin with the raw amino-acid sequence, 62 residues long: Conorfamide-Tx1 (62 aa).

The N-terminal stretch at 1-19 (MSGRGFLLLALLLLVTVEA) is a signal peptide. The propeptide occupies 20-26 (TKVEKNK). Y46 carries the tyrosine amide modification. A propeptide spanning residues 47–62 (GRRDMQSPLLSERLRF) is cleaved from the precursor.

The protein belongs to the FARP (FMRFamide related peptide) family. As to expression, expressed by the venom duct.

The protein resides in the secreted. Its function is as follows. This peptide does not show activity on human and mouse sensory neuron-specific G-protein coupled receptors MRGPRX1. This is Conorfamide-Tx1 from Conus textile (Cloth-of-gold cone).